Reading from the N-terminus, the 389-residue chain is Succinate--CoA ligase [ADP-forming] subunit beta (389 aa).

The region spanning 9–244 (KQLFAEYGLP…PSQEDEREAH (236 aa)) is the ATP-grasp domain. ATP-binding positions include K46, 53-55 (GRG), E99, T102, and E107. N199 and D213 together coordinate Mg(2+). Residues N264 and 321 to 323 (GIV) contribute to the substrate site.

The protein belongs to the succinate/malate CoA ligase beta subunit family. In terms of assembly, heterotetramer of two alpha and two beta subunits. It depends on Mg(2+) as a cofactor.

The enzyme catalyses succinate + ATP + CoA = succinyl-CoA + ADP + phosphate. It carries out the reaction GTP + succinate + CoA = succinyl-CoA + GDP + phosphate. It participates in carbohydrate metabolism; tricarboxylic acid cycle; succinate from succinyl-CoA (ligase route): step 1/1. In terms of biological role, succinyl-CoA synthetase functions in the citric acid cycle (TCA), coupling the hydrolysis of succinyl-CoA to the synthesis of either ATP or GTP and thus represents the only step of substrate-level phosphorylation in the TCA. The beta subunit provides nucleotide specificity of the enzyme and binds the substrate succinate, while the binding sites for coenzyme A and phosphate are found in the alpha subunit. This is Succinate--CoA ligase [ADP-forming] subunit beta from Teredinibacter turnerae (strain ATCC 39867 / T7901).